The sequence spans 114 residues: Nucleoid-associated protein MAB_0319 (114 aa).

The protein belongs to the YbaB/EbfC family. As to quaternary structure, homodimer.

The protein resides in the cytoplasm. It is found in the nucleoid. Binds to DNA and alters its conformation. May be involved in regulation of gene expression, nucleoid organization and DNA protection. This is Nucleoid-associated protein MAB_0319 from Mycobacteroides abscessus (strain ATCC 19977 / DSM 44196 / CCUG 20993 / CIP 104536 / JCM 13569 / NCTC 13031 / TMC 1543 / L948) (Mycobacterium abscessus).